Reading from the N-terminus, the 292-residue chain is Nucleotide-binding protein SACE_2139 (292 aa).

15–22 (GLSGAGRS) is an ATP binding site. Residue 66–69 (DVRS) participates in GTP binding.

Belongs to the RapZ-like family.

Its function is as follows. Displays ATPase and GTPase activities. The polypeptide is Nucleotide-binding protein SACE_2139 (Saccharopolyspora erythraea (strain ATCC 11635 / DSM 40517 / JCM 4748 / NBRC 13426 / NCIMB 8594 / NRRL 2338)).